Reading from the N-terminus, the 434-residue chain is Mitochondrial distribution and morphology protein 10 (434 aa).

It belongs to the MDM10 family. Component of the ER-mitochondria encounter structure (ERMES) or MDM complex, composed of mmm1, mdm10, mdm12 and mdm34. Associates with the mitochondrial outer membrane sorting assembly machinery SAM(core) complex.

It localises to the mitochondrion outer membrane. Its function is as follows. Component of the ERMES/MDM complex, which serves as a molecular tether to connect the endoplasmic reticulum and mitochondria. Components of this complex are involved in the control of mitochondrial shape and protein biogenesis and may function in phospholipid exchange. mdm10 is involved in the late assembly steps of the general translocase of the mitochondrial outer membrane (TOM complex). Functions in the tom40-specific route of the assembly of outer membrane beta-barrel proteins, including the association of tom40 with the receptor tom22 and small TOM proteins. Can associate with the SAM(core) complex as well as the mdm12-mmm1 complex, both involved in late steps of the major beta-barrel assembly pathway, that is responsible for biogenesis of all outer membrane beta-barrel proteins. May act as a switch that shuttles between both complexes and channels precursor proteins into the tom40-specific pathway. Plays a role in mitochondrial morphology and in the inheritance of mitochondria. This chain is Mitochondrial distribution and morphology protein 10 (mdmB), found in Aspergillus niger (strain ATCC MYA-4892 / CBS 513.88 / FGSC A1513).